We begin with the raw amino-acid sequence, 138 residues long: Cell division protein SepF (138 aa).

This sequence belongs to the SepF family. In terms of assembly, homodimer. Interacts with FtsZ.

The protein resides in the cytoplasm. Its function is as follows. Cell division protein that is part of the divisome complex and is recruited early to the Z-ring. Probably stimulates Z-ring formation, perhaps through the cross-linking of FtsZ protofilaments. Its function overlaps with FtsA. In Limosilactobacillus reuteri (strain DSM 20016) (Lactobacillus reuteri), this protein is Cell division protein SepF.